The chain runs to 101 residues: Protein Tat (101 aa).

Residues 1–24 are interaction with human CREBBP; that stretch reads MEPVDPNLEPWKHPGSQPRTACNN. The tract at residues 1 to 48 is transactivation; it reads MEPVDPNLEPWKHPGSQPRTACNNCYCKKCCFHCYACFTRKGLGISYG. Zn(2+)-binding residues include C22, C25, and C27. The interval 22-37 is cysteine-rich; the sequence is CNNCYCKKCCFHCYAC. N6-acetyllysine; by host PCAF is present on K28. Zn(2+)-binding residues include C30, H33, C34, and C37. The interval 38 to 48 is core; the sequence is FTRKGLGISYG. Residues 48–57 are compositionally biased toward basic residues; that stretch reads GRKKRRQRRR. Positions 48-101 are disordered; sequence GRKKRRQRRRAPQDSQTHQASLSKQPASQSRGDPTGPTESKKKVERETETDPFD. Residues 49–57 carry the Nuclear localization signal, RNA-binding (TAR), and protein transduction motif; the sequence is RKKRRQRRR. The tract at residues 49–86 is interaction with the host capping enzyme RNGTT; the sequence is RKKRRQRRRAPQDSQTHQASLSKQPASQSRGDPTGPTE. N6-acetyllysine; by host EP300 and GCN5L2 is present on residues K50 and K51. Residues R52 and R53 each carry the asymmetric dimethylarginine; by host PRMT6 modification. Residues 60–79 show a composition bias toward polar residues; that stretch reads QDSQTHQASLSKQPASQSRG. Residue K71 forms a Glycyl lysine isopeptide (Lys-Gly) (interchain with G-Cter in ubiquitin) linkage. The Cell attachment site signature appears at 78–80; it reads RGD. Basic and acidic residues predominate over residues 86–101; that stretch reads ESKKKVERETETDPFD.

It belongs to the lentiviruses Tat family. As to quaternary structure, interacts with host CCNT1. Associates with the P-TEFb complex composed at least of Tat, P-TEFb (CDK9 and CCNT1), TAR RNA, RNA Pol II. Recruits the HATs CREBBP, TAF1/TFIID, EP300, PCAF and GCN5L2. Interacts with host KAT5/Tip60; this interaction targets the latter to degradation. Interacts with the host deacetylase SIRT1. Interacts with host capping enzyme RNGTT; this interaction stimulates RNGTT. Binds to host KDR, and to the host integrins ITGAV/ITGB3 and ITGA5/ITGB1. Interacts with host KPNB1/importin beta-1 without previous binding to KPNA1/importin alpha-1. Interacts with EIF2AK2. Interacts with host nucleosome assembly protein NAP1L1; this interaction may be required for the transport of Tat within the nucleus, since the two proteins interact at the nuclear rim. Interacts with host C1QBP/SF2P32; this interaction involves lysine-acetylated Tat. Interacts with the host chemokine receptors CCR2, CCR3 and CXCR4. Interacts with host DPP4/CD26; this interaction may trigger an anti-proliferative effect. Interacts with host LDLR. Interacts with the host extracellular matrix metalloproteinase MMP1. Interacts with host PRMT6; this interaction mediates Tat's methylation. Interacts with, and is ubiquitinated by MDM2/Hdm2. Interacts with host PSMC3 and HTATIP2. Interacts with STAB1; this interaction may overcome SATB1-mediated repression of IL2 and IL2RA (interleukin) in T cells by binding to the same domain than HDAC1. Interacts (when acetylated) with human CDK13, thereby increasing HIV-1 mRNA splicing and promoting the production of the doubly spliced HIV-1 protein Nef. Interacts with host TBP; this interaction modulates the activity of transcriptional pre-initiation complex. Interacts with host RELA. Interacts with host PLSCR1; this interaction negatively regulates Tat transactivation activity by altering its subcellular distribution. Asymmetrical arginine methylation by host PRMT6 seems to diminish the transactivation capacity of Tat and affects the interaction with host CCNT1. In terms of processing, acetylation by EP300, CREBBP, GCN5L2/GCN5 and PCAF regulates the transactivation activity of Tat. EP300-mediated acetylation of Lys-50 promotes dissociation of Tat from the TAR RNA through the competitive binding to PCAF's bromodomain. In addition, the non-acetylated Tat's N-terminus can also interact with PCAF. PCAF-mediated acetylation of Lys-28 enhances Tat's binding to CCNT1. Lys-50 is deacetylated by SIRT1. Post-translationally, polyubiquitination by host MDM2 does not target Tat to degradation, but activates its transactivation function and fosters interaction with CCNT1 and TAR RNA. Phosphorylated by EIF2AK2 on serine and threonine residues adjacent to the basic region important for TAR RNA binding and function. Phosphorylation of Tat by EIF2AK2 is dependent on the prior activation of EIF2AK2 by dsRNA.

The protein localises to the host nucleus. Its subcellular location is the host nucleolus. The protein resides in the host cytoplasm. It is found in the secreted. In terms of biological role, transcriptional activator that increases RNA Pol II processivity, thereby increasing the level of full-length viral transcripts. Recognizes a hairpin structure at the 5'-LTR of the nascent viral mRNAs referred to as the transactivation responsive RNA element (TAR) and recruits the cyclin T1-CDK9 complex (P-TEFb complex) that will in turn hyperphosphorylate the RNA polymerase II to allow efficient elongation. The CDK9 component of P-TEFb and other Tat-activated kinases hyperphosphorylate the C-terminus of RNA Pol II that becomes stabilized and much more processive. Other factors such as HTATSF1/Tat-SF1, SUPT5H/SPT5, and HTATIP2 are also important for Tat's function. Besides its effect on RNA Pol II processivity, Tat induces chromatin remodeling of proviral genes by recruiting the histone acetyltransferases (HATs) CREBBP, EP300 and PCAF to the chromatin. This also contributes to the increase in proviral transcription rate, especially when the provirus integrates in transcriptionally silent region of the host genome. To ensure maximal activation of the LTR, Tat mediates nuclear translocation of NF-kappa-B by interacting with host RELA. Through its interaction with host TBP, Tat may also modulate transcription initiation. Tat can reactivate a latently infected cell by penetrating in it and transactivating its LTR promoter. In the cytoplasm, Tat is thought to act as a translational activator of HIV-1 mRNAs. Its function is as follows. Extracellular circulating Tat can be endocytosed by surrounding uninfected cells via the binding to several surface receptors such as CD26, CXCR4, heparan sulfate proteoglycans (HSPG) or LDLR. Neurons are rarely infected, but they internalize Tat via their LDLR. Through its interaction with nuclear HATs, Tat is potentially able to control the acetylation-dependent cellular gene expression. Modulates the expression of many cellular genes involved in cell survival, proliferation or in coding for cytokines or cytokine receptors. Tat plays a role in T-cell and neurons apoptosis. Tat induced neurotoxicity and apoptosis probably contribute to neuroAIDS. Circulating Tat also acts as a chemokine-like and/or growth factor-like molecule that binds to specific receptors on the surface of the cells, affecting many cellular pathways. In the vascular system, Tat binds to ITGAV/ITGB3 and ITGA5/ITGB1 integrins dimers at the surface of endothelial cells and competes with bFGF for heparin-binding sites, leading to an excess of soluble bFGF. The protein is Protein Tat of Homo sapiens (Human).